The following is a 260-amino-acid chain: Small ribosomal subunit protein uS2 (260 aa).

The interval 224–260 (GRQGQDAGEDSAEKTFADTADGEGDFEESSNNENQEA) is disordered. The span at 243-260 (ADGEGDFEESSNNENQEA) shows a compositional bias: acidic residues.

Belongs to the universal ribosomal protein uS2 family.

In Oenococcus oeni (strain ATCC BAA-331 / PSU-1), this protein is Small ribosomal subunit protein uS2.